The sequence spans 629 residues: Forkhead box protein O (629 aa).

At Thr49 the chain carries Phosphothreonine; by PKB/AKT1. Ser78 carries the phosphoserine modification. The fork-head DNA-binding region spans 98-204 (WGNLSYADLI…ETSRYEKRRG (107 aa)). Disordered stretches follow at residues 185–208 (KSVRRRAASMETSRYEKRRGRAKK), 220–274 (GLND…SPIR), 321–368 (QQQF…QTLQ), 394–417 (SPNSVTTTMSPAYPNSEPSSDSLN), and 563–597 (QHLQQQQQQHHQHQQQLLLNNNNNNNNNNSSNSSL). A Phosphoserine; by PKB/AKT1 modification is found at Ser193. Composition is skewed to polar residues over residues 224–233 (ATPSPSSSVS) and 259–268 (RASSNASSCG). The residue at position 262 (Ser262) is a Phosphoserine; by PKB/AKT1. Residues Ser265, Ser266, and Ser271 each carry the phosphoserine modification. Residues 332 to 341 (SQPPPPPYQP) are compositionally biased toward pro residues. Residues 342–356 (PQLQQQQQQQPSYSL) show a composition bias toward low complexity. The segment covering 394 to 403 (SPNSVTTTMS) has biased composition (polar residues).

Interacts with melt.

It is found in the cytoplasm. Its subcellular location is the nucleus. Transcription factor involved in the regulation of the insulin signaling pathway. Consistently activates both the downstream target Thor\d4EBP and the feedback control target InR. Involved in negative regulation of the cell cycle, modulating cell growth and proliferation. In response to cellular stresses, such as nutrient deprivation or increased levels of reactive oxygen species, foxo is activated and inhibits growth through the action of target genes such as Thor. Foxo activated in the adult fat body can regulate lifespan in adults; an insulin peptide itself may function as one secondary messenger of insulin-regulated aging. Also regulates Lip4, homolog of human acid lipases, thereby acting as a key modulator of lipid metabolism by insulin signaling and integrates insulin responses to glucose and lipid homeostasis. The chain is Forkhead box protein O from Drosophila persimilis (Fruit fly).